The following is a 506-amino-acid chain: NADH-quinone oxidoreductase subunit N (506 aa).

14 consecutive transmembrane segments (helical) span residues 14–34 (MVPE…DLFF), 40–60 (YVAL…ITLY), 72–92 (FVLD…AALI), 109–129 (GEYY…ASSV), 131–151 (FVTL…LVGI), 166–186 (VING…LYGI), 209–229 (LLLA…IATV), 256–276 (MAGF…VSVQ), 286–306 (MSIY…VVAL), 314–334 (LFAY…VALS), 343–363 (FYML…HGLI), 385–405 (AIVM…AGFI), 420–440 (AHYV…VYYF), and 465–485 (IVMS…MIGY).

Belongs to the complex I subunit 2 family. In terms of assembly, NDH-1 is composed of 14 different subunits. Subunits NuoA, H, J, K, L, M, N constitute the membrane sector of the complex.

Its subcellular location is the cell membrane. The enzyme catalyses a quinone + NADH + 5 H(+)(in) = a quinol + NAD(+) + 4 H(+)(out). Its function is as follows. NDH-1 shuttles electrons from NADH, via FMN and iron-sulfur (Fe-S) centers, to quinones in the respiratory chain. The immediate electron acceptor for the enzyme in this species is believed to be a menaquinone. Couples the redox reaction to proton translocation (for every two electrons transferred, four hydrogen ions are translocated across the cytoplasmic membrane), and thus conserves the redox energy in a proton gradient. This chain is NADH-quinone oxidoreductase subunit N, found in Bacillus anthracis.